Reading from the N-terminus, the 235-residue chain is Auracyanin-B (235 aa).

Low complexity predominate over residues 1-21 (MSWRGSGRSNFRSRSSSNGGS). 2 disordered regions span residues 1-27 (MSWRGSGRSNFRSRSSSNGGSTFSGGS) and 64-107 (ATPR…NVVN). Positions 1-56 (MSWRGSGRSNFRSRSSSNGGSTFSGGSAGGPPLIVMMGLAFGAGLIMLIVMIASNA) are cleaved as a signal peptide. Residues 57–80 (TAGGFVAATPRPTATPRPTAAPAP) constitute a propeptide that is removed on maturation. Residues 69-86 (TATPRPTAAPAPTQPPAA) are compositionally biased toward pro residues. Low complexity predominate over residues 87–100 (QPTTAPATQAANAP). One can recognise a Plastocyanin-like domain in the interval 111 to 235 (AQTVEVRAAP…GMKGTLTVTP (125 aa)). Positions 152, 217, 222, and 227 each coordinate Cu cation.

This sequence belongs to the multicopper oxidase family. It depends on Cu cation as a cofactor. Post-translationally, glycosylated.

The protein resides in the cell membrane. In terms of biological role, probably a soluble electron acceptor for the integral membrane protein electron transfer alternative complex III (ACIII). The protein is Auracyanin-B of Chloroflexus aurantiacus (strain ATCC 29366 / DSM 635 / J-10-fl).